The primary structure comprises 321 residues: Malate dehydrogenase (321 aa).

Residues 10–15 and aspartate 34 contribute to the NAD(+) site; that span reads GAGQIG. Substrate-binding residues include arginine 83 and arginine 89. Residues asparagine 96 and 119 to 121 contribute to the NAD(+) site; that span reads ITN. 2 residues coordinate substrate: asparagine 121 and arginine 152. Histidine 176 serves as the catalytic Proton acceptor.

Belongs to the LDH/MDH superfamily. MDH type 3 family.

The enzyme catalyses (S)-malate + NAD(+) = oxaloacetate + NADH + H(+). Its function is as follows. Catalyzes the reversible oxidation of malate to oxaloacetate. The protein is Malate dehydrogenase of Xanthobacter autotrophicus (strain ATCC BAA-1158 / Py2).